Consider the following 126-residue polypeptide: Class I hydrophobin 1 (126 aa).

Positions 1 to 16 are cleaved as a signal peptide; the sequence is MQYMTIVAFLAATVAA. Intrachain disulfides connect Cys-38–Cys-100, Cys-46–Cys-94, Cys-47–Cys-75, and Cys-101–Cys-119.

It belongs to the fungal hydrophobin family.

The protein localises to the secreted. It is found in the cell wall. Functionally, aerial growth, conidiation, and dispersal of filamentous fungi in the environment rely upon a capability of their secreting small amphipathic proteins called hydrophobins (HPBs) with low sequence identity. Class I can self-assemble into an outermost layer of rodlet bundles on aerial cell surfaces, conferring cellular hydrophobicity that supports fungal growth, development and dispersal; whereas Class II form highly ordered films at water-air interfaces through intermolecular interactions but contribute nothing to the rodlet structure. HYD1 and HYD2 are required for the structural integrity of the long aerial chains of microconidia. Does not seem to be important for the ability to cause seedling disease. This is Class I hydrophobin 1 from Gibberella moniliformis (Maize ear and stalk rot fungus).